The following is a 172-amino-acid chain: Adenine phosphoribosyltransferase (172 aa).

The protein belongs to the purine/pyrimidine phosphoribosyltransferase family. Homodimer.

It is found in the cytoplasm. It catalyses the reaction AMP + diphosphate = 5-phospho-alpha-D-ribose 1-diphosphate + adenine. The protein operates within purine metabolism; AMP biosynthesis via salvage pathway; AMP from adenine: step 1/1. Functionally, catalyzes a salvage reaction resulting in the formation of AMP, that is energically less costly than de novo synthesis. In Picosynechococcus sp. (strain ATCC 27264 / PCC 7002 / PR-6) (Agmenellum quadruplicatum), this protein is Adenine phosphoribosyltransferase.